Reading from the N-terminus, the 194-residue chain is uncharacterized protein (194 aa).

Residues Pro25–Ser156 form a disordered region. Polar residues predominate over residues Gly43 to Gln57. A compositionally biased stretch (low complexity) spans Ser104–Leu113.

This is an uncharacterized protein from Homo sapiens (Human).